Reading from the N-terminus, the 107-residue chain is L-rhamnose mutarotase (107 aa).

Substrate is bound at residue Tyr21. His25 acts as the Proton donor in catalysis. Substrate contacts are provided by residues Tyr44 and Trp79–Trp80. The interval Glu88–Asp107 is disordered. Residues Asn90–Leu100 show a composition bias toward polar residues.

This sequence belongs to the rhamnose mutarotase family. In terms of assembly, homodimer.

It localises to the cytoplasm. The enzyme catalyses alpha-L-rhamnose = beta-L-rhamnose. It functions in the pathway carbohydrate metabolism; L-rhamnose metabolism. Its function is as follows. Involved in the anomeric conversion of L-rhamnose. The sequence is that of L-rhamnose mutarotase from Flavobacterium johnsoniae (strain ATCC 17061 / DSM 2064 / JCM 8514 / BCRC 14874 / CCUG 350202 / NBRC 14942 / NCIMB 11054 / UW101) (Cytophaga johnsonae).